The primary structure comprises 463 residues: Glutamate--tRNA ligase 2 (463 aa).

The 'HIGH' region motif lies at 11-21; that stretch reads PSPTGYLHIGG. The 'KMSKS' region signature appears at 240 to 244; it reads KLSKR. Position 243 (lysine 243) interacts with ATP.

The protein belongs to the class-I aminoacyl-tRNA synthetase family. Glutamate--tRNA ligase type 1 subfamily. In terms of assembly, monomer.

It localises to the cytoplasm. The enzyme catalyses tRNA(Glu) + L-glutamate + ATP = L-glutamyl-tRNA(Glu) + AMP + diphosphate. In terms of biological role, catalyzes the attachment of glutamate to tRNA(Glu) in a two-step reaction: glutamate is first activated by ATP to form Glu-AMP and then transferred to the acceptor end of tRNA(Glu). The chain is Glutamate--tRNA ligase 2 from Campylobacter jejuni subsp. jejuni serotype O:2 (strain ATCC 700819 / NCTC 11168).